Reading from the N-terminus, the 561-residue chain is Potassium-transporting ATPase potassium-binding subunit (561 aa).

12 helical membrane passes run 2 to 22 (GLGLLQIGLTLCIVIAITPVL), 65 to 85 (YIRAILYTNLFMGILVYSLIH), 135 to 155 (ALGFLMFTSAATGLAVGIAFI), 177 to 197 (ILLPISVIGAIALVLLGVPQT), 253 to 273 (FIETIAMIAIPAAMIYTYGVF), 280 to 300 (AWLLFWMVFIVFVILVWVAAT), 327 to 347 (FGWAETALWAVMTTATMCGAV), 353 to 373 (ALMPQGLFATLFNLFLQIIWG), 378 to 398 (GTAYLFIYLILTVFLTGLMVG), 413 to 433 (IVLASLILLVHPIVVLIPSAI), 482 to 502 (LSTSLSILVGRYVPIIAMLLL), and 531 to 551 (AGIVLILGVLTFFPVLALGPI).

Belongs to the KdpA family. The system is composed of three essential subunits: KdpA, KdpB and KdpC.

The protein resides in the cell membrane. Part of the high-affinity ATP-driven potassium transport (or Kdp) system, which catalyzes the hydrolysis of ATP coupled with the electrogenic transport of potassium into the cytoplasm. This subunit binds the extracellular potassium ions and delivers the ions to the membrane domain of KdpB through an intramembrane tunnel. The protein is Potassium-transporting ATPase potassium-binding subunit of Anabaena sp. (strain L31).